The chain runs to 416 residues: Prostate tumor-overexpressed gene 1 protein (416 aa).

Residues 1 to 53 (MVRPRRAPYRSGAGGPLGGRGRPPRPLVVRAVRSRSWPASPRGPQPPRIRARS) are disordered. The span at 12 to 21 (GAGGPLGGRG) shows a compositional bias: gly residues. The span at 27–36 (LVVRAVRSRS) shows a compositional bias: low complexity. A Phosphoserine modification is found at Ser-53. An interaction with FLOT1 region spans residues 184-416 (NGFAGCMLFP…QEQQQRGMGG (233 aa)).

It belongs to the Mediator complex subunit 25 family. PTOV1 subfamily. As to quaternary structure, may interact with CREBBP. Interacts with FLOT1. Post-translationally, ubiquitinated by the CRL2(KLHDC2) complex, which recognizes the diglycine (Gly-Gly) at the C-terminus, leading to its degradation. Ubiquitinated by the CRL2(APPBP2) complex, which recognizes the Arg-Xaa-Xaa-Gly sequence at the C-terminus, leading to its degradation. As to expression, expressed in brain, heart, kidney, liver, placenta, skeletal muscle and small intestine.

It is found in the cytoplasm. The protein localises to the nucleus. It localises to the cell membrane. Its subcellular location is the perinuclear region. May activate transcription. Required for nuclear translocation of FLOT1. Promotes cell proliferation. This Homo sapiens (Human) protein is Prostate tumor-overexpressed gene 1 protein (PTOV1).